A 568-amino-acid polypeptide reads, in one-letter code: MASDSGTPPPPWEPTLSGSLPASTAIPLKRAALEEDFTPSVPSPLNPDVRSTPKPQGVDDMPAKRNKKESLKKRESKGAFGGDSNRGTPDPKHREPKQSDYSPMRYKLAPPKPSDFEPARPAVFTYHHDVPALDGGKIQFYETSEHVHNKKSYHYTHCIADPGFPSSLYYRGTEAEPHGPHLSFEDSATHLFFDQTGRHITTNKGFRMTRANVAIREGRFYWEVKITRGIVDKKNGEGQPESHGHVRMGFARREASVDAPVGFDAYSYGFRDVGGEKVYMSRPKPFFPEEEGIREGDVIGLEIQLPSERLQRKVLAGQYNPAVDTGLDDDSTAFDAPNIVRDRIPIRFKQHIYFEKIDYHTTKELEDLMNPSPVSSGPANSVEAPNPNHTVPALRTLPSSYIKVYKNGVLMGTPFTDLLAFLPPASKPQAQIGAREGLDNGMLGYYPAVSVFRGGAAEVNFGPDFWFPPPGIVEDPDNEVSMIDGGQDEPSKSYAFAYPGLDKIRPVSERYTEQIVEDIVYDIIDEVDFWIQDGCKVIDRFGQGEKAGHTGSLAASGRDEIKELVQDD.

A disordered region spans residues 1-113 (MASDSGTPPP…MRYKLAPPKP (113 aa)). Composition is skewed to basic and acidic residues over residues 68–77 (KESLKKRESK) and 89–98 (PDPKHREPKQ). A B30.2/SPRY domain is found at 160 to 353 (ADPGFPSSLY…IPIRFKQHIY (194 aa)).

This sequence belongs to the cclA family. In terms of assembly, component of the COMPASS complex.

Its subcellular location is the nucleus. It is found in the chromosome. It localises to the telomere. Functionally, component of the COMPASS (Set1C) complex that specifically mono-, di- and trimethylates histone H3 to form H3K4me1/2/3, which subsequently plays a role in telomere length maintenance and transcription elongation regulation. Controls the production of several secondary metabolites, including colletochlorins, higginsianins and sclerosporide. Plays a key role in mycelial growth, sporulation, spore germination and virulence. This Colletotrichum higginsianum (strain IMI 349063) (Crucifer anthracnose fungus) protein is COMPASS component cclA.